The primary structure comprises 132 residues: Putative nickel-responsive regulator (132 aa).

The Ni(2+) site is built by His77, His88, His90, and Cys96.

Belongs to the transcriptional regulatory CopG/NikR family. Requires Ni(2+) as cofactor.

Transcriptional regulator. This chain is Putative nickel-responsive regulator, found in Brucella abortus (strain S19).